Reading from the N-terminus, the 113-residue chain is Mini zinc finger protein 3 (113 aa).

The ZF-HD dimerization-type; degenerate zinc-finger motif lies at 24 to 83 (YGECRRNHAASTGGHAVDGCREFIAAEDGGGGNSTGAVGVAAAALKCAACGCHRSFHRRV). A disordered region spans residues 93–113 (DCDSGDTSSSSPSSSSSLSSE). Low complexity predominate over residues 97–113 (GDTSSSSPSSSSSLSSE).

As to quaternary structure, homo- and heterodimers.

Its subcellular location is the cytoplasm. Functionally, inhibits zinc finger homeodomain (ZHD) transcription factors, by interacting with them to prevent both their nuclear localization and their DNA-binding properties. In Oryza sativa subsp. indica (Rice), this protein is Mini zinc finger protein 3 (MIF3).